We begin with the raw amino-acid sequence, 206 residues long: Large ribosomal subunit protein uL4 (206 aa).

Positions 43-52 (NKRQGTQSAK) are enriched in polar residues. The interval 43–86 (NKRQGTQSAKTRAEVSGGGRKPWRQKGTGHARQGSTRSPQWKGG) is disordered.

The protein belongs to the universal ribosomal protein uL4 family. Part of the 50S ribosomal subunit.

In terms of biological role, one of the primary rRNA binding proteins, this protein initially binds near the 5'-end of the 23S rRNA. It is important during the early stages of 50S assembly. It makes multiple contacts with different domains of the 23S rRNA in the assembled 50S subunit and ribosome. Functionally, forms part of the polypeptide exit tunnel. This Lachnoclostridium phytofermentans (strain ATCC 700394 / DSM 18823 / ISDg) (Clostridium phytofermentans) protein is Large ribosomal subunit protein uL4.